Consider the following 562-residue polypeptide: Long-chain-fatty-acid--CoA ligase (562 aa).

It belongs to the ATP-dependent AMP-binding enzyme family. The cofactor is Mg(2+).

The protein localises to the membrane. It catalyses the reaction a long-chain fatty acid + ATP + CoA = a long-chain fatty acyl-CoA + AMP + diphosphate. It participates in lipid metabolism; fatty acid beta-oxidation. Functionally, catalyzes the esterification, concomitant with transport, of exogenous long-chain fatty acids into metabolically active CoA thioesters for subsequent degradation or incorporation into phospholipids. The chain is Long-chain-fatty-acid--CoA ligase (fadD) from Haemophilus influenzae (strain ATCC 51907 / DSM 11121 / KW20 / Rd).